The following is a 357-amino-acid chain: Heat-inducible transcription repressor HrcA (357 aa).

It belongs to the HrcA family.

Its function is as follows. Negative regulator of class I heat shock genes (grpE-dnaK-dnaJ and groELS operons). Prevents heat-shock induction of these operons. The protein is Heat-inducible transcription repressor HrcA of Anabaena sp. (strain L31).